Reading from the N-terminus, the 471-residue chain is Methionine aminopeptidase 2 (471 aa).

2 disordered regions span residues 16 to 80 (VVDD…IDRF) and 92 to 139 (CEHP…DFNR). Over residues 32-47 (EDGDDNDDAVNEGEAV) the composition is skewed to acidic residues. The segment covering 52–65 (KKKKKKNKKKKKKG) has biased composition (basic residues). Residues 119 to 139 (AEERAKDDAKHGSDDPLDFNR) show a composition bias toward basic and acidic residues. H224 contributes to the substrate binding site. The a divalent metal cation site is built by D244, D255, and H324. Residue H332 participates in substrate binding. Residues E357 and E452 each contribute to the a divalent metal cation site.

It belongs to the peptidase M24A family. Methionine aminopeptidase eukaryotic type 2 subfamily. Requires Co(2+) as cofactor. Zn(2+) serves as cofactor. Mn(2+) is required as a cofactor. The cofactor is Fe(2+).

It is found in the cytoplasm. It carries out the reaction Release of N-terminal amino acids, preferentially methionine, from peptides and arylamides.. In terms of biological role, cotranslationally removes the N-terminal methionine from nascent proteins. The N-terminal methionine is often cleaved when the second residue in the primary sequence is small and uncharged (Met-Ala-, Cys, Gly, Pro, Ser, Thr, or Val). This chain is Methionine aminopeptidase 2, found in Yarrowia lipolytica (strain CLIB 122 / E 150) (Yeast).